A 365-amino-acid polypeptide reads, in one-letter code: Outer membrane protein assembly factor BamC (365 aa).

The signal sequence occupies residues 1–16; the sequence is MLKKVTPLFLVAAVAA. The N-palmitoyl cysteine moiety is linked to residue Cys-17. Residue Cys-17 is the site of S-diacylglycerol cysteine attachment.

This sequence belongs to the BamC family. In terms of assembly, part of the Bam complex.

It localises to the cell outer membrane. Functionally, part of the outer membrane protein assembly complex, which is involved in assembly and insertion of beta-barrel proteins into the outer membrane. This Shewanella oneidensis (strain ATCC 700550 / JCM 31522 / CIP 106686 / LMG 19005 / NCIMB 14063 / MR-1) protein is Outer membrane protein assembly factor BamC.